A 409-amino-acid chain; its full sequence is Gamma-glutamyl phosphate reductase (409 aa).

This sequence belongs to the gamma-glutamyl phosphate reductase family.

It is found in the cytoplasm. The enzyme catalyses L-glutamate 5-semialdehyde + phosphate + NADP(+) = L-glutamyl 5-phosphate + NADPH + H(+). It functions in the pathway amino-acid biosynthesis; L-proline biosynthesis; L-glutamate 5-semialdehyde from L-glutamate: step 2/2. Functionally, catalyzes the NADPH-dependent reduction of L-glutamate 5-phosphate into L-glutamate 5-semialdehyde and phosphate. The product spontaneously undergoes cyclization to form 1-pyrroline-5-carboxylate. This Koribacter versatilis (strain Ellin345) protein is Gamma-glutamyl phosphate reductase.